Here is a 220-residue protein sequence, read N- to C-terminus: Riboflavin kinase (220 aa).

Positions 1–92 (METDDQYYRA…LSRILAIKNN (92 aa)) are H-T-H motif-like. Positions 93-220 (VVITGTVTSG…GDRVSVEVYT (128 aa)) are riboflavin kinase. Residue 102–107 (GMGEGR) coordinates CDP. Thr131 and Asn133 together coordinate Mg(2+). FMN contacts are provided by Thr188 and Glu195. Position 200–203 (200–203 (KYLR)) interacts with CDP.

Belongs to the archaeal riboflavin kinase family. It depends on Mg(2+) as a cofactor.

It carries out the reaction riboflavin + CTP = CDP + FMN + H(+). It participates in cofactor biosynthesis; FMN biosynthesis; FMN from riboflavin (CTP route): step 1/1. In terms of biological role, catalyzes the CTP-dependent phosphorylation of riboflavin (vitamin B2) to form flavin mononucleotide (FMN). The polypeptide is Riboflavin kinase (ribK) (Thermoplasma acidophilum (strain ATCC 25905 / DSM 1728 / JCM 9062 / NBRC 15155 / AMRC-C165)).